We begin with the raw amino-acid sequence, 329 residues long: DNA-directed RNA polymerase subunit alpha (329 aa).

Positions 1–234 (MQGSVTEFLK…EQLDAFVELR (234 aa)) are alpha N-terminal domain (alpha-NTD). Residues 248-329 (FDPILLRPVD…WPPASLADDL (82 aa)) form an alpha C-terminal domain (alpha-CTD) region.

This sequence belongs to the RNA polymerase alpha chain family. In terms of assembly, homodimer. The RNAP catalytic core consists of 2 alpha, 1 beta, 1 beta' and 1 omega subunit. When a sigma factor is associated with the core the holoenzyme is formed, which can initiate transcription.

It catalyses the reaction RNA(n) + a ribonucleoside 5'-triphosphate = RNA(n+1) + diphosphate. In terms of biological role, DNA-dependent RNA polymerase catalyzes the transcription of DNA into RNA using the four ribonucleoside triphosphates as substrates. This chain is DNA-directed RNA polymerase subunit alpha, found in Shewanella amazonensis (strain ATCC BAA-1098 / SB2B).